The chain runs to 197 residues: Putative peptidyl-prolyl cis-trans isomerase (197 aa).

In terms of domain architecture, PPIase cyclophilin-type spans 14-195; the sequence is NEIKLIMHTN…HDITIDSIEI (182 aa).

This sequence belongs to the cyclophilin-type PPIase family.

It carries out the reaction [protein]-peptidylproline (omega=180) = [protein]-peptidylproline (omega=0). Functionally, PPIases accelerate the folding of proteins. It catalyzes the cis-trans isomerization of proline imidic peptide bonds in oligopeptides. This is Putative peptidyl-prolyl cis-trans isomerase from Staphylococcus saprophyticus subsp. saprophyticus (strain ATCC 15305 / DSM 20229 / NCIMB 8711 / NCTC 7292 / S-41).